A 361-amino-acid chain; its full sequence is Putative agmatine deiminase (361 aa).

The active-site Amidino-cysteine intermediate is Cys354.

Belongs to the agmatine deiminase family.

The catalysed reaction is agmatine + H2O = N-carbamoylputrescine + NH4(+). This chain is Putative agmatine deiminase, found in Streptococcus pneumoniae (strain Hungary19A-6).